Consider the following 201-residue polypeptide: Thymidylate kinase (201 aa).

7 to 14 lines the ATP pocket; it reads GGEGSGKT.

The protein belongs to the thymidylate kinase family.

The catalysed reaction is dTMP + ATP = dTDP + ADP. Its function is as follows. Phosphorylation of dTMP to form dTDP in both de novo and salvage pathways of dTTP synthesis. In Acholeplasma laidlawii (strain PG-8A), this protein is Thymidylate kinase.